The primary structure comprises 205 residues: Large ribosomal subunit protein uL4 (205 aa).

Belongs to the universal ribosomal protein uL4 family. As to quaternary structure, part of the 50S ribosomal subunit.

Its function is as follows. One of the primary rRNA binding proteins, this protein initially binds near the 5'-end of the 23S rRNA. It is important during the early stages of 50S assembly. It makes multiple contacts with different domains of the 23S rRNA in the assembled 50S subunit and ribosome. Functionally, forms part of the polypeptide exit tunnel. In Ruegeria sp. (strain TM1040) (Silicibacter sp.), this protein is Large ribosomal subunit protein uL4.